The chain runs to 274 residues: Probable ribosomal RNA small subunit methyltransferase A (274 aa).

The S-adenosyl-L-methionine site is built by histidine 22, leucine 24, glycine 50, glutamate 71, aspartate 99, and asparagine 114.

It belongs to the class I-like SAM-binding methyltransferase superfamily. rRNA adenine N(6)-methyltransferase family. RsmA subfamily.

The protein resides in the cytoplasm. Its function is as follows. Specifically dimethylates two adjacent adenosines in the loop of a conserved hairpin near the 3'-end of 16S rRNA in the 30S particle. May play a critical role in biogenesis of 30S subunits. The protein is Probable ribosomal RNA small subunit methyltransferase A of Natronomonas pharaonis (strain ATCC 35678 / DSM 2160 / CIP 103997 / JCM 8858 / NBRC 14720 / NCIMB 2260 / Gabara) (Halobacterium pharaonis).